The sequence spans 228 residues: E3 ubiquitin-protein ligase RNF114 (228 aa).

An RING-type zinc finger spans residues 29–68 (CPVCLEVYEKPVQVPCGHVFCSACLQECLKPKKPVCGVCR). Zn(2+) is bound by residues Cys-91 and Cys-94. Residues 91 to 110 (CHGCRKNFFLSKIRSHVATC) form a C2HC RNF-type zinc finger. N6-acetyllysine is present on Lys-102. Zn(2+)-binding residues include His-106 and Cys-110. Lys-112 bears the N6-acetyllysine mark.

As to quaternary structure, interacts with XAF1, the interaction increases XAF1 stability and proapoptotic effects, and may regulate IFN signaling. Autoubiquitinated. Polyubiquitinated in the presence of E2 enzymes UBE2D1, UBE2D2 and UBE2D3, but only monoubiquitinated in the presence of UBE2E1. Expressed in numerous tissues, including skin, CD4 lymphocytes and dendritic cells. Highest levels in testis.

Its subcellular location is the cytoplasm. It localises to the nucleus. The enzyme catalyses S-ubiquitinyl-[E2 ubiquitin-conjugating enzyme]-L-cysteine + [acceptor protein]-L-lysine = [E2 ubiquitin-conjugating enzyme]-L-cysteine + N(6)-ubiquitinyl-[acceptor protein]-L-lysine.. The protein operates within protein modification; protein ubiquitination. Its function is as follows. E3 ubiquitin-protein ligase that promotes the ubiquitination of various substrates. In turn, participates in the regulation of many biological processes including cell cycle, apoptosis, osteoclastogenesis as well as innate or adaptive immunity. Acts as a negative regulator of NF-kappa-B-dependent transcription by promoting the ubiquitination and stabilization of the NF-kappa-B inhibitor TNFAIP3. May promote the ubiquitination of TRAF6 as well. Also acts as a negative regulator of T-cell activation. Inhibits cellular dsRNA responses and interferon production by targeting MAVS component for proteasomal degradation. Ubiquitinates the CDK inhibitor CDKN1A leading to its degradationand probably also CDKN1B and CDKN1C. This activity stimulates cell cycle G1-to-S phase transition and suppresses cellular senescence. May play a role in spermatogenesis. In Homo sapiens (Human), this protein is E3 ubiquitin-protein ligase RNF114 (RNF114).